The following is a 287-amino-acid chain: mRNA-capping enzyme regulatory subunit OPG124 (287 aa).

The protein belongs to the orthopoxvirus mRNA-capping enzyme regulatory subunit family. Interacts with the catalytic subunit OPG113.

Its subcellular location is the virion. Functionally, regulatory subunit of the mRNA cap enzyme which stabilizes the catalytic subunit and enhances its methyltransferase activity through an allosteric mechanism. Heterodimeric mRNA capping enzyme catalyzes the linkage of a N7-methyl-guanosine moiety to the first transcribed nucleotide (cap 0 structure), whereas the methyltransferase OPG102 is responsible for a second methylation at the 2'-O position of the ribose (cap 1 structure). Also involved in early viral gene transcription termination and intermediate viral gene transcription initiation. Early gene transcription termination requires the termination factor VTF, the DNA-dependent ATPase NPH-I/OPG123 and the RAP94/OPG109 subunit of the viral RNA polymerase, as well as the presence of a specific termination motif. Binds, together with RAP94/OPG109, to the termination motif 5'-UUUUUNU-3' in the nascent early mRNA. This chain is mRNA-capping enzyme regulatory subunit OPG124 (OPG124), found in Bos taurus (Bovine).